The following is a 378-amino-acid chain: Queuine tRNA-ribosyltransferase (378 aa).

The active-site Proton acceptor is the Asp-92. Substrate is bound by residues 92–96 (DSGGF), Asp-146, Gln-188, and Gly-215. An RNA binding region spans residues 246-252 (GVGTHLE). Asp-265 (nucleophile) is an active-site residue. The RNA binding; important for wobble base 34 recognition stretch occupies residues 270 to 274 (TRLAR). Zn(2+)-binding residues include Cys-303, Cys-305, Cys-308, and His-334.

The protein belongs to the queuine tRNA-ribosyltransferase family. Homodimer. Within each dimer, one monomer is responsible for RNA recognition and catalysis, while the other monomer binds to the replacement base PreQ1. Zn(2+) serves as cofactor.

It carries out the reaction 7-aminomethyl-7-carbaguanine + guanosine(34) in tRNA = 7-aminomethyl-7-carbaguanosine(34) in tRNA + guanine. It participates in tRNA modification; tRNA-queuosine biosynthesis. In terms of biological role, catalyzes the base-exchange of a guanine (G) residue with the queuine precursor 7-aminomethyl-7-deazaguanine (PreQ1) at position 34 (anticodon wobble position) in tRNAs with GU(N) anticodons (tRNA-Asp, -Asn, -His and -Tyr). Catalysis occurs through a double-displacement mechanism. The nucleophile active site attacks the C1' of nucleotide 34 to detach the guanine base from the RNA, forming a covalent enzyme-RNA intermediate. The proton acceptor active site deprotonates the incoming PreQ1, allowing a nucleophilic attack on the C1' of the ribose to form the product. After dissociation, two additional enzymatic reactions on the tRNA convert PreQ1 to queuine (Q), resulting in the hypermodified nucleoside queuosine (7-(((4,5-cis-dihydroxy-2-cyclopenten-1-yl)amino)methyl)-7-deazaguanosine). The protein is Queuine tRNA-ribosyltransferase of Thermosynechococcus vestitus (strain NIES-2133 / IAM M-273 / BP-1).